The following is a 112-amino-acid chain: FK506-binding protein 1 (112 aa).

Positions 1 to 10 (MSAPATTQVE) are enriched in polar residues. The disordered stretch occupies residues 1–20 (MSAPATTQVEILQEGDGKTF). Residues 24-112 (GDLVTIHYTG…LFDVELLNVN (89 aa)) form the PPIase FKBP-type domain.

This sequence belongs to the FKBP-type PPIase family. FKBP1 subfamily.

It localises to the cytoplasm. It catalyses the reaction [protein]-peptidylproline (omega=180) = [protein]-peptidylproline (omega=0). With respect to regulation, inhibited by both FK506 and rapamycin. PPIases accelerate the folding of proteins. It catalyzes the cis-trans isomerization of proline imidic peptide bonds in oligopeptides. The protein is FK506-binding protein 1 (FPR1) of Debaryomyces hansenii (strain ATCC 36239 / CBS 767 / BCRC 21394 / JCM 1990 / NBRC 0083 / IGC 2968) (Yeast).